The primary structure comprises 197 residues: Protein GrpE (197 aa).

The span at 1–12 shows a compositional bias: basic and acidic residues; sequence MTDSDGKTDKSG. The disordered stretch occupies residues 1 to 35; the sequence is MTDSDGKTDKSGEPAAEVEPVVSKPYVMPDDPEDD.

Belongs to the GrpE family. As to quaternary structure, homodimer.

The protein resides in the cytoplasm. Its function is as follows. Participates actively in the response to hyperosmotic and heat shock by preventing the aggregation of stress-denatured proteins, in association with DnaK and GrpE. It is the nucleotide exchange factor for DnaK and may function as a thermosensor. Unfolded proteins bind initially to DnaJ; upon interaction with the DnaJ-bound protein, DnaK hydrolyzes its bound ATP, resulting in the formation of a stable complex. GrpE releases ADP from DnaK; ATP binding to DnaK triggers the release of the substrate protein, thus completing the reaction cycle. Several rounds of ATP-dependent interactions between DnaJ, DnaK and GrpE are required for fully efficient folding. The protein is Protein GrpE of Nitrobacter winogradskyi (strain ATCC 25391 / DSM 10237 / CIP 104748 / NCIMB 11846 / Nb-255).